The following is a 532-amino-acid chain: Phosphoenolpyruvate carboxykinase (ATP) (532 aa).

Arginine 58, tyrosine 194, and lysine 200 together coordinate substrate. Residues lysine 200, histidine 220, and glycine 236–threonine 244 each bind ATP. Lysine 200 and histidine 220 together coordinate Mn(2+). Position 257 (aspartate 257) interacts with Mn(2+). ATP-binding positions include glutamate 285, arginine 322, arginine 442–valine 443, and threonine 448. Arginine 322 is a binding site for substrate.

Belongs to the phosphoenolpyruvate carboxykinase (ATP) family. The cofactor is Mn(2+).

It is found in the cytoplasm. It catalyses the reaction oxaloacetate + ATP = phosphoenolpyruvate + ADP + CO2. It functions in the pathway carbohydrate biosynthesis; gluconeogenesis. Its function is as follows. Involved in the gluconeogenesis. Catalyzes the conversion of oxaloacetate (OAA) to phosphoenolpyruvate (PEP) through direct phosphoryl transfer between the nucleoside triphosphate and OAA. This Rubrobacter xylanophilus (strain DSM 9941 / JCM 11954 / NBRC 16129 / PRD-1) protein is Phosphoenolpyruvate carboxykinase (ATP).